The following is a 633-amino-acid chain: Ankyrin repeat and SOCS box protein 2 (633 aa).

Residues 26 to 45 (SEDELVQMAIEQSLADKTRG) form the UIM domain. 12 ANK repeats span residues 102-131 (APVD…NLSE), 135-165 (EGWL…VIDQ), 169-198 (QEET…EPDI), 202-231 (SRET…DTNH), 235-264 (RGWT…KVEA), 268-297 (YGIT…DINT), 301-330 (DSAS…DANK), 334-363 (DGML…RTRV), 366-395 (SGIS…DVNA), 408-437 (RRSS…DPNR), 438-467 (DVIN…NIDA), and 474-502 (TAFP…NGEP). Phosphoserine is present on serine 369. In terms of domain architecture, SOCS box spans 579 to 633 (EDWAVIKEKAEPPRPLAHLCRLRVRKAIGKYRIKLLDTLPLPGRLIRYLKYENTQ).

Belongs to the ankyrin SOCS box (ASB) family. Component of a probable ECS E3 ubiquitin-protein ligase complex which contains CUL5, either RBX1 or RNF7/RBX2, Elongin BC complex (ELOB and ELOC) and ASB2. Interacts with SKP2. Through its interaction with SKP2, likely to bridge the formation of dimeric E3-ubiquitin-protein ligase complexes composed of an ECS complex and an SCF(SKP2) complex. Interacts with JAK2; the interaction targets JAK2 for Notch-mediated proteasomal degradation. Interacts with TCF3/E2A; the interaction is mediated by SKP2 and targets TCF3 for Notch-mediated proteasomal degradation. Interacts with DES. In terms of processing, monoubiquitinated.

The protein resides in the cytoplasm. The protein localises to the cytoskeleton. It is found in the stress fiber. Its subcellular location is the myofibril. It localises to the sarcomere. The protein resides in the z line. It functions in the pathway protein modification; protein ubiquitination. Functionally, substrate-recognition component of a SCF-like ECS (Elongin-Cullin-SOCS-box protein) E3 ubiquitin-protein ligase complex which mediates the ubiquitination and subsequent proteasomal degradation of target proteins. Mediates Notch-induced ubiquitination and degradation of substrates including E2A and JAK2. Required during embryonic heart development for complete heart looping. Required for cardiomyocyte differentiation. Involved in myogenic differentiation and targets filamin FLNB for proteasomal degradation but not filamin FLNA. Also targets DES for proteasomal degradation. Acts as a negative regulator of skeletal muscle mass. This is Ankyrin repeat and SOCS box protein 2 from Bos taurus (Bovine).